We begin with the raw amino-acid sequence, 103 residues long: Small ribosomal subunit protein uS10 (103 aa).

It belongs to the universal ribosomal protein uS10 family. In terms of assembly, part of the 30S ribosomal subunit.

Its function is as follows. Involved in the binding of tRNA to the ribosomes. The protein is Small ribosomal subunit protein uS10 of Tolumonas auensis (strain DSM 9187 / NBRC 110442 / TA 4).